Consider the following 333-residue polypeptide: Trimethylamine N-oxide-binding protein (333 aa).

The first 42 residues, 1–42, serve as a signal peptide directing secretion; sequence MRLFREIAANDPGPTGRMKNMKTFTTALATGVLALCPLAALA. Trimethylamine N-oxide-binding residues include Trp-55, Trp-102, Glu-131, Trp-177, and Trp-222. Positions 249, 251, 254, 257, and 260 each coordinate Ca(2+).

In terms of assembly, the complex is probably composed of two ATP-binding proteins (TmoW), two transmembrane proteins (TmoV) and a solute-binding protein (TmoX). Monomer in solution, but forms homodimers in crystals.

It is found in the periplasm. Its activity is regulated as follows. Binds a Ca(2+) ion, which has little effect on either the binding affinity or the secondary structure, but plays an important role in maintaining the stability of TmoX. It may modulate the protein stability in response to biological needs and environmental changes. Thermostability is dramatically decreased when Ca(2+) is removed by EDTA. In terms of biological role, part of the ABC transporter complex TmoXWV involved in trimethylamine N-oxide (TMAO) import. Is specific for TMAO and essential for TMAO metabolism. Binds TMAO with high affinity. In vitro, also presents a high binding affinity for choline, however this transporter seems specific for TMAO and the choline-binding affinity presented by recombinant TmoX may not make physiological sense. The protein is Trimethylamine N-oxide-binding protein of Ruegeria pomeroyi (strain ATCC 700808 / DSM 15171 / DSS-3) (Silicibacter pomeroyi).